We begin with the raw amino-acid sequence, 336 residues long: Cytoskeleton protein RodZ (336 aa).

Topologically, residues 1-111 (MNTEATHDQN…LGKRRKKRDG (111 aa)) are cytoplasmic. The 53-residue stretch at 19 to 71 (LRNAREQLGLSQQAVAERLCLKVSTVRDIEEDKAPSDLASTFLRGYIRSYARL) folds into the HTH cro/C1-type domain. A DNA-binding region (H-T-H motif) is located at residues 30 to 49 (QQAVAERLCLKVSTVRDIEE). A helical; Signal-anchor for type II membrane protein transmembrane segment spans residues 112 to 132 (WLMSFTWLVLFVVVGLTGAWW). Over 133-336 (WQNHKAQQEE…TLNAEPTPAQ (204 aa)) the chain is Periplasmic. Residues 155–243 (NADKDSGQSV…PSALPTSQAG (89 aa)) form a disordered region. Polar residues predominate over residues 161–175 (GQSVPLDTGAVTSQD). Composition is skewed to low complexity over residues 176–214 (TTPAQTAPAPATPVDSTAATQTQTPAPTAAATQNTVVAP) and 221–243 (TAATSAAPAATETPSALPTSQAG).

The protein belongs to the RodZ family.

It is found in the cell inner membrane. Cytoskeletal protein that is involved in cell-shape control through regulation of the length of the long axis. This Salmonella newport (strain SL254) protein is Cytoskeleton protein RodZ.